The following is an 88-amino-acid chain: Small ribosomal subunit protein bS20 (88 aa).

It belongs to the bacterial ribosomal protein bS20 family.

Binds directly to 16S ribosomal RNA. In Rhodospirillum rubrum (strain ATCC 11170 / ATH 1.1.1 / DSM 467 / LMG 4362 / NCIMB 8255 / S1), this protein is Small ribosomal subunit protein bS20.